Reading from the N-terminus, the 67-residue chain is Large ribosomal subunit protein bL35 (67 aa).

The protein belongs to the bacterial ribosomal protein bL35 family.

The protein is Large ribosomal subunit protein bL35 of Synechocystis sp. (strain ATCC 27184 / PCC 6803 / Kazusa).